Reading from the N-terminus, the 122-residue chain is UPF0102 protein ECH_0093 (122 aa).

It belongs to the UPF0102 family.

The chain is UPF0102 protein ECH_0093 from Ehrlichia chaffeensis (strain ATCC CRL-10679 / Arkansas).